The sequence spans 1728 residues: Protein NETWORKED 1A (1728 aa).

Residues 13-92 enclose the NAB domain; sequence YSWWWDSHIP…ERYDHATVEL (80 aa). 7 coiled-coil regions span residues 155–446, 476–827, 857–885, 954–1016, 1090–1323, 1403–1431, and 1576–1684; these read LGNS…LEIE, MLRD…QVEI, FSEK…EIDN, QFQS…AELQ, EQAE…KETV, LLQD…LRRR, and RRLA…TKSK. The interval 1419–1441 is disordered; that stretch reads AEEKKRRGKLRRRSSSHRSKDRK. A compositionally biased stretch (basic residues) spans 1424 to 1439; the sequence is RRGKLRRRSSSHRSKD.

Belongs to the NET family. In terms of assembly, interacts with F-actin. In terms of tissue distribution, expressed in root meristems and at very low levels throughout mature vasculature.

It localises to the cytoplasm. It is found in the cytoskeleton. The protein resides in the cell membrane. The protein localises to the cell junction. Its subcellular location is the plasmodesma. Plant-specific actin binding protein. Associates with F-actin at the plasma membrane and plasmodesmata. May be part of a membrane-cytoskeletal adapter complex. The polypeptide is Protein NETWORKED 1A (Arabidopsis thaliana (Mouse-ear cress)).